Reading from the N-terminus, the 90-residue chain is Small ribosomal subunit protein uS15c (90 aa).

This sequence belongs to the universal ribosomal protein uS15 family. In terms of assembly, part of the 30S ribosomal subunit.

It is found in the plastid. The protein resides in the chloroplast. This is Small ribosomal subunit protein uS15c (rps15) from Acorus calamus (Sweet flag).